We begin with the raw amino-acid sequence, 373 residues long: Inhibitor of nuclear factor kappa-B kinase-interacting protein (373 aa).

Over residues 1-11 the composition is skewed to basic residues; that stretch reads MSEVKSRKKPG. Residues 1–38 form a disordered region; that stretch reads MSEVKSRKKPGPKVAAPEPEKRSDGRKNPEARGGAGWA. The span at 18–30 shows a compositional bias: basic and acidic residues; the sequence is EPEKRSDGRKNPE. A helical membrane pass occupies residues 43 to 59; that stretch reads GLSLLSLATSLGLAWLV. Coiled coils occupy residues 64 to 257 and 290 to 325; these read EKFA…DKLS and TERK…LEGI. Residue N151 is glycosylated (N-linked (GlcNAc...) asparagine).

N-glycosylated at Asn-151.

The protein localises to the endoplasmic reticulum membrane. Target of p53/TP53 with pro-apoptotic function. The polypeptide is Inhibitor of nuclear factor kappa-B kinase-interacting protein (Ikbip) (Rattus norvegicus (Rat)).